Reading from the N-terminus, the 75-residue chain is Peptide Ctri10033 (75 aa).

Residues 1–22 (MNSKYLFVFLILIVTFTDLCQG) form the signal peptide. Arginine amide is present on R43. A propeptide spanning residues 47 to 75 (ELGSQYDYLQDFRKRELDLDDLLSKFPDY) is cleaved from the precursor.

It belongs to the non-disulfide-bridged peptide (NDBP) superfamily. Short antimicrobial peptide (group 4) family. Expressed by the venom gland.

The protein resides in the secreted. The protein is Peptide Ctri10033 of Chaerilus tricostatus (Scorpion).